Consider the following 242-residue polypeptide: ADP-dependent L-serine kinase SerK (242 aa).

Glutamate 30 is an active-site residue. Positions 43, 49, 51, and 52 each coordinate ADP. Valine 68 contributes to the O-phospho-L-serine binding site. 5 residues coordinate ADP: aspartate 69, glycine 70, histidine 71, histidine 72, and arginine 73. Aspartate 69 is a Mg(2+) binding site. Positions 70, 71, and 72 each coordinate O-phospho-L-serine. 4 residues coordinate O-phospho-L-serine: tryptophan 102, lysine 221, threonine 223, and histidine 225.

Belongs to the SerK family. Requires Mg(2+) as cofactor.

The catalysed reaction is L-serine + ADP = O-phospho-L-serine + AMP + H(+). It functions in the pathway amino-acid biosynthesis; L-cysteine biosynthesis; L-cysteine from L-serine: step 1/2. Free serine kinase that uses ADP to phosphorylate L-serine to yield O-phospho-L-serine and AMP. The sequence is that of ADP-dependent L-serine kinase SerK from Thermococcus kodakarensis (strain ATCC BAA-918 / JCM 12380 / KOD1) (Pyrococcus kodakaraensis (strain KOD1)).